The sequence spans 258 residues: Indole-3-glycerol phosphate synthase (258 aa).

The protein belongs to the TrpC family.

It carries out the reaction 1-(2-carboxyphenylamino)-1-deoxy-D-ribulose 5-phosphate + H(+) = (1S,2R)-1-C-(indol-3-yl)glycerol 3-phosphate + CO2 + H2O. Its pathway is amino-acid biosynthesis; L-tryptophan biosynthesis; L-tryptophan from chorismate: step 4/5. In Legionella pneumophila (strain Lens), this protein is Indole-3-glycerol phosphate synthase.